Reading from the N-terminus, the 328-residue chain is L-lactate dehydrogenase (328 aa).

NAD(+) contacts are provided by residues Val18, Glu39, Lys46, Tyr71, and 85–86 (GA). Substrate contacts are provided by Gln88 and Arg94. NAD(+) contacts are provided by residues Ser107, 124 to 126 (AAN), and Ser149. A substrate-binding site is contributed by 126-129 (NPVD). 154-157 (DSAR) is a substrate binding site. Beta-D-fructose 1,6-bisphosphate-binding residues include Arg159 and His174. His181 serves as the catalytic Proton acceptor. Tyr226 is subject to Phosphotyrosine. Residue Thr235 participates in substrate binding.

The protein belongs to the LDH/MDH superfamily. LDH family. As to quaternary structure, homotetramer.

The protein localises to the cytoplasm. It catalyses the reaction (S)-lactate + NAD(+) = pyruvate + NADH + H(+). Its pathway is fermentation; pyruvate fermentation to lactate; (S)-lactate from pyruvate: step 1/1. With respect to regulation, allosterically activated by fructose 1,6-bisphosphate (FBP). Catalyzes the conversion of lactate to pyruvate. The sequence is that of L-lactate dehydrogenase from Streptococcus pneumoniae (strain ATCC BAA-255 / R6).